A 74-amino-acid polypeptide reads, in one-letter code: uncharacterized protein (74 aa).

Residues 54–72 (LIIPRFLLLIYSVIQCLFL) traverse the membrane as a helical segment.

It localises to the membrane. This is an uncharacterized protein from Saccharomyces cerevisiae (strain ATCC 204508 / S288c) (Baker's yeast).